Consider the following 390-residue polypeptide: UPF0229 protein OB2647 (390 aa).

Residues 99-121 (NASQQGQQGQGNGKKAGDQPGTD) are disordered.

Belongs to the UPF0229 family.

In Oceanobacillus iheyensis (strain DSM 14371 / CIP 107618 / JCM 11309 / KCTC 3954 / HTE831), this protein is UPF0229 protein OB2647.